The chain runs to 314 residues: Methionyl-tRNA formyltransferase (314 aa).

110–113 (SLLP) is a binding site for (6S)-5,6,7,8-tetrahydrofolate.

This sequence belongs to the Fmt family.

It carries out the reaction L-methionyl-tRNA(fMet) + (6R)-10-formyltetrahydrofolate = N-formyl-L-methionyl-tRNA(fMet) + (6S)-5,6,7,8-tetrahydrofolate + H(+). Its function is as follows. Attaches a formyl group to the free amino group of methionyl-tRNA(fMet). The formyl group appears to play a dual role in the initiator identity of N-formylmethionyl-tRNA by promoting its recognition by IF2 and preventing the misappropriation of this tRNA by the elongation apparatus. The sequence is that of Methionyl-tRNA formyltransferase from Levilactobacillus brevis (strain ATCC 367 / BCRC 12310 / CIP 105137 / JCM 1170 / LMG 11437 / NCIMB 947 / NCTC 947) (Lactobacillus brevis).